Consider the following 906-residue polypeptide: Protein translocase subunit SecA (906 aa).

ATP is bound by residues Q86, 104–108 (GEGKT), and D511. 2 stretches are compositionally biased toward basic and acidic residues: residues 853–865 (HESV…RHDE) and 877–888 (VRREGPKVKRND). The tract at residues 853 to 906 (HESVIDNNQRHDEDEQEEAPKVQQVRREGPKVKRNDPCPCGSGKKYKQCHGKVE) is disordered. Zn(2+) contacts are provided by C890, C892, C901, and H902. Residues 896 to 906 (KKYKQCHGKVE) are compositionally biased toward basic residues.

The protein belongs to the SecA family. As to quaternary structure, monomer and homodimer. Part of the essential Sec protein translocation apparatus which comprises SecA, SecYEG and auxiliary proteins SecDF-YajC and YidC. Zn(2+) serves as cofactor.

It localises to the cell inner membrane. The protein localises to the cytoplasm. It carries out the reaction ATP + H2O + cellular proteinSide 1 = ADP + phosphate + cellular proteinSide 2.. Its function is as follows. Part of the Sec protein translocase complex. Interacts with the SecYEG preprotein conducting channel. Has a central role in coupling the hydrolysis of ATP to the transfer of proteins into and across the cell membrane, serving both as a receptor for the preprotein-SecB complex and as an ATP-driven molecular motor driving the stepwise translocation of polypeptide chains across the membrane. This chain is Protein translocase subunit SecA, found in Francisella tularensis subsp. holarctica (strain FTNF002-00 / FTA).